Here is a 243-residue protein sequence, read N- to C-terminus: Ribosomal RNA small subunit methyltransferase G (243 aa).

S-adenosyl-L-methionine-binding positions include glycine 79, phenylalanine 84, 130–131 (AE), and arginine 150. Residues 222-243 (KPTPNKYPRKPGIPNKQPLGGA) form a disordered region.

This sequence belongs to the methyltransferase superfamily. RNA methyltransferase RsmG family.

It localises to the cytoplasm. Functionally, specifically methylates the N7 position of a guanine in 16S rRNA. This chain is Ribosomal RNA small subunit methyltransferase G, found in Lacticaseibacillus paracasei (strain ATCC 334 / BCRC 17002 / CCUG 31169 / CIP 107868 / KCTC 3260 / NRRL B-441) (Lactobacillus paracasei).